We begin with the raw amino-acid sequence, 800 residues long: Kolavenyl diphosphate synthase TPS5, chloroplastic (800 aa).

Residues 1-75 constitute a chloroplast transit peptide; the sequence is MSLAYSQATS…VILTAEKSVD (75 aa). Residue Lys-244 coordinates substrate. Mg(2+) is bound by residues Asp-375 and Asp-377. The DXDD motif signature appears at 375–378; sequence DVDD. Lys-461 is a substrate binding site.

Belongs to the terpene synthase family. Mg(2+) is required as a cofactor. Mostly expressed in trichomes of leaves and fruits.

It is found in the plastid. Its subcellular location is the chloroplast. It catalyses the reaction (2E,6E,10E)-geranylgeranyl diphosphate = (+)-kolavenyl diphosphate. The protein operates within secondary metabolite biosynthesis; terpenoid biosynthesis. Functionally, involved in the biosynthesis of labdane-type diterpenoid including cleroda-dienols, and peregrinol lactones and furan derivatives, dopaminergic diterpenoids that can bind to dopamine receptors in the human pituitary gland, have probably ability to lower prolactin levels, and are used to treat menstrual cycle disorders (e.g. premenstrual syndrome and mastodynia). Terpene synthase that produces kolavenyl diphosphate from geranylgeranyl diphosphate (GGPP). In Vitex agnus-castus (Chaste tree), this protein is Kolavenyl diphosphate synthase TPS5, chloroplastic.